The sequence spans 142 residues: Nucleoside diphosphate kinase (142 aa).

Lys11, Phe59, Arg87, Thr93, Arg104, and Asn114 together coordinate ATP. The active-site Pros-phosphohistidine intermediate is the His117.

It belongs to the NDK family. As to quaternary structure, homotetramer. Mg(2+) serves as cofactor.

The protein localises to the cytoplasm. The enzyme catalyses a 2'-deoxyribonucleoside 5'-diphosphate + ATP = a 2'-deoxyribonucleoside 5'-triphosphate + ADP. It catalyses the reaction a ribonucleoside 5'-diphosphate + ATP = a ribonucleoside 5'-triphosphate + ADP. Functionally, major role in the synthesis of nucleoside triphosphates other than ATP. The ATP gamma phosphate is transferred to the NDP beta phosphate via a ping-pong mechanism, using a phosphorylated active-site intermediate. This chain is Nucleoside diphosphate kinase, found in Wigglesworthia glossinidia brevipalpis.